The sequence spans 422 residues: Cell division protein DivIB (422 aa).

Basic and acidic residues-rich tracts occupy residues 1-23 (MVDW…KQEE) and 62-75 (EEAK…DQEQ). Residues 1-77 (MVDWDKEAQR…DFAKDQEQKH (77 aa)) form a disordered region. Topologically, residues 1–109 (MVDWDKEAQR…LQLKSVSWSR (109 aa)) are cytoplasmic. Residues 110 to 130 (LILAAAFLFMIIFSAFWLSPL) form a helical membrane-spanning segment. The POTRA domain occupies 131–202 (NRIATIEVSG…RTVEVNVQEF (72 aa)). The Extracellular segment spans residues 131–422 (NRIATIEVSG…TVTQTRSSNS (292 aa)). Residues 329–422 (NPLNDPFASP…TVTQTRSSNS (94 aa)) are disordered. Over residues 338 to 379 (PEEKASYQEKVDQAKEKSKEKQAKADKHSSESKLGDKPKPRG) the composition is skewed to basic and acidic residues. Over residues 389–422 (TSSQRQTSSQSSPRPGTNSSQQSSTVTQTRSSNS) the composition is skewed to low complexity.

It belongs to the FtsQ/DivIB family. DivIB subfamily.

The protein resides in the cell membrane. Cell division protein that may be involved in stabilizing or promoting the assembly of the division complex. In Aerococcus urinae (strain CCUG 59500 / ACS-120-V-Col10a), this protein is Cell division protein DivIB.